The following is a 548-amino-acid chain: Chaperonin GroEL (548 aa).

ATP is bound by residues 30–33, Lys-51, 87–91, Gly-415, 479–481, and Asp-495; these read TLGP, DGTTT, and NAA.

This sequence belongs to the chaperonin (HSP60) family. In terms of assembly, forms a cylinder of 14 subunits composed of two heptameric rings stacked back-to-back. Interacts with the co-chaperonin GroES.

Its subcellular location is the cytoplasm. The enzyme catalyses ATP + H2O + a folded polypeptide = ADP + phosphate + an unfolded polypeptide.. In terms of biological role, together with its co-chaperonin GroES, plays an essential role in assisting protein folding. The GroEL-GroES system forms a nano-cage that allows encapsulation of the non-native substrate proteins and provides a physical environment optimized to promote and accelerate protein folding. The protein is Chaperonin GroEL of Methylibium petroleiphilum (strain ATCC BAA-1232 / LMG 22953 / PM1).